The following is a 64-amino-acid chain: Large ribosomal subunit protein bL33 (64 aa).

Residues 19-40 (TSTDPKRSNGVSRYTTEKNRRN) are disordered.

It belongs to the bacterial ribosomal protein bL33 family.

The protein is Large ribosomal subunit protein bL33 of Prochlorococcus marinus (strain MIT 9215).